The chain runs to 473 residues: Photosystem II CP43 reaction center protein (473 aa).

Residues 1-14 (MKTLYSLRRFYPVE) constitute a propeptide that is removed on maturation. Threonine 15 bears the N-acetylthreonine mark. At threonine 15 the chain carries Phosphothreonine. 5 consecutive transmembrane segments (helical) span residues 69-93 (LFEV…PHLA), 134-155 (LLGP…KDRN), 178-200 (KALY…RKIT), 255-275 (KPFA…LSYS), and 291-312 (WFNN…ASQA). Glutamate 367 lines the [CaMn4O5] cluster pocket. Residues 447 to 471 (RARAAAAGFEKGIDRDLEPVLSMTP) traverse the membrane as a helical segment.

The protein belongs to the PsbB/PsbC family. PsbC subfamily. In terms of assembly, PSII is composed of 1 copy each of membrane proteins PsbA, PsbB, PsbC, PsbD, PsbE, PsbF, PsbH, PsbI, PsbJ, PsbK, PsbL, PsbM, PsbT, PsbX, PsbY, PsbZ, Psb30/Ycf12, at least 3 peripheral proteins of the oxygen-evolving complex and a large number of cofactors. It forms dimeric complexes. Requires Binds multiple chlorophylls and provides some of the ligands for the Ca-4Mn-5O cluster of the oxygen-evolving complex. It may also provide a ligand for a Cl- that is required for oxygen evolution. PSII binds additional chlorophylls, carotenoids and specific lipids. as cofactor.

It is found in the plastid. It localises to the chloroplast thylakoid membrane. Its function is as follows. One of the components of the core complex of photosystem II (PSII). It binds chlorophyll and helps catalyze the primary light-induced photochemical processes of PSII. PSII is a light-driven water:plastoquinone oxidoreductase, using light energy to abstract electrons from H(2)O, generating O(2) and a proton gradient subsequently used for ATP formation. The chain is Photosystem II CP43 reaction center protein from Phalaenopsis aphrodite subsp. formosana (Moth orchid).